The following is a 487-amino-acid chain: Serine/threonine-protein phosphatase 2A activator 1 (487 aa).

2 disordered regions span residues 1–28 (MPMI…SSST) and 426–487 (GGIQ…PKPE).

Belongs to the PTPA-type PPIase family.

It is found in the cytoplasm. The protein resides in the nucleus. It catalyses the reaction [protein]-peptidylproline (omega=180) = [protein]-peptidylproline (omega=0). PPIases accelerate the folding of proteins. It catalyzes the cis-trans isomerization of proline imidic peptide bonds in oligopeptides. Acts as a regulatory subunit for PP2A-like phosphatases modulating their activity or substrate specificity, probably by inducing a conformational change in the catalytic subunit, a direct target of the PPIase. Can reactivate inactive phosphatase PP2A-phosphatase methylesterase complexes (PP2Ai) in presence of ATP and Mg(2+) by dissociating the inactive form from the complex. The polypeptide is Serine/threonine-protein phosphatase 2A activator 1 (RRD1) (Mycosarcoma maydis (Corn smut fungus)).